The sequence spans 85 residues: Large ribosomal subunit protein bL27 (85 aa).

Residues 1–20 (MAHKKAGGSTRNGRDSEAKR) form a disordered region.

This sequence belongs to the bacterial ribosomal protein bL27 family.

The chain is Large ribosomal subunit protein bL27 from Serratia proteamaculans (strain 568).